We begin with the raw amino-acid sequence, 274 residues long: Karrikin insensitive 2 receptor IA (274 aa).

The Nucleophile role is filled by serine 95. Residues aspartate 217 and histidine 246 contribute to the active site.

The protein belongs to the AB hydrolase superfamily. Interacts with MAX2A and MAX2B in the presence of (-)-germacrene D, thus forming an E3 SCF ubiquitin ligase complex (ASK-cullin-F-box) containing MAX2A or MAX2B and KAI2IA recognizing SMAX1A; this leads to the subsequent degradation of the transcriptional corepressor SMAX1A, thus triggering the activation of a downstream signaling cascade. Strongly expressed in stigma.

The protein localises to the nucleus. Its subcellular location is the cytoplasm. Hydrolysis activity toward yoshimulactone green (YLG), a fluorescent agonist to strigolactone receptor, is inhibited by (-)-germacrene D and GR24, a synthetic strigolactone analog. Its function is as follows. Hydrolase involved in the olfaction of sesquiterpene volatile organic compounds (VOCs) during volatile plant communication in a MAX2 proteins-dependent manner. Acts as a karrikin-insensitive receptor that stereospecifically perceives and binds to (-)-germacrene D, particularly in stigmas, and triggers a signaling cascade influencing plant fitness, as the result of reproductive organ growth-promoting effect; this process involves an interaction with MAX2 proteins (e.g. MAX2A and MAX2B) and the subsequent degradation of SMAX1a, a transcriptional corepressor. The chain is Karrikin insensitive 2 receptor IA from Petunia hybrida (Petunia).